The primary structure comprises 113 residues: U11-theraphotoxin-Hhn1a (113 aa).

An N-terminal signal peptide occupies residues 1–21 (MNTVRVTFLPVFVLAVSLGQA). Residues 22 to 74 (DKDENRMEMQEKTEQGKSYLDFAENLLLQKLEELEAKLLEEDSEESRNSRQKR) constitute a propeptide that is removed on maturation. Residues 61 to 83 (EEDSEESRNSRQKRCIGEGVPCD) are disordered. Intrachain disulfides connect C75–C90, C82–C95, and C89–C110.

It belongs to the neurotoxin 14 (magi-1) family. 01 (HNTX-16) subfamily. As to expression, expressed by the venom gland.

The protein resides in the secreted. The chain is U11-theraphotoxin-Hhn1a from Cyriopagopus hainanus (Chinese bird spider).